A 445-amino-acid chain; its full sequence is Solute carrier family 52, riboflavin transporter, member 2 (445 aa).

The next 6 helical transmembrane spans lie at 14–34 (LLVA…WVEL), 47–67 (LPSY…VVTL), 86–106 (VLGM…APVA), 112–132 (VAFL…NVTF), 147–167 (FFLG…VQGV), and 196–216 (FFWA…GLLL). The disordered stretch occupies residues 228 to 264 (ELGSGLQVGAPGAEEEVEESSPLQEPPSQAAGTTPGP). Residues 247–258 (SSPLQEPPSQAA) show a composition bias toward low complexity. A run of 5 helical transmembrane segments spans residues 277–297 (ACLL…LPAV), 312–332 (LAVV…MGVL), 339–359 (LGGL…LAVL), 366–386 (VGTS…LGVF), and 404–424 (ALLA…VAMF).

Belongs to the riboflavin transporter family. Highly expressed in brain, fetal brain and salivary gland. Weakly expressed in other tissues.

It localises to the cell membrane. The catalysed reaction is riboflavin(in) = riboflavin(out). Its activity is regulated as follows. Riboflavin transport is Na(+)-independent but moderately pH-sensitive. Activity is strongly inhibited by riboflavin analogs, such as lumiflavin. Weakly inhibited by flavin adenine dinucleotide (FAD) and flavin mononucleotide (FMN). Plasma membrane transporter mediating the uptake by cells of the water soluble vitamin B2/riboflavin that plays a key role in biochemical oxidation-reduction reactions of the carbohydrate, lipid, and amino acid metabolism. Humans are unable to synthesize vitamin B2/riboflavin and must obtain it via intestinal absorption. May also act as a receptor for 4-hydroxybutyrate. Its function is as follows. (Microbial infection) In case of infection by retroviruses, acts as a cell receptor to retroviral envelopes similar to the porcine endogenous retrovirus (PERV-A). This chain is Solute carrier family 52, riboflavin transporter, member 2 (SLC52A2), found in Homo sapiens (Human).